We begin with the raw amino-acid sequence, 283 residues long: UPF0273 protein STK_18300 (283 aa).

Positions Leu-4–Glu-249 constitute a KaiC domain. ATP is bound at residue Gly-31 to Ser-38. The interval Met-261–Glu-283 is disordered. The span at Glu-267–Glu-283 shows a compositional bias: acidic residues.

It belongs to the UPF0273 family.

The sequence is that of UPF0273 protein STK_18300 from Sulfurisphaera tokodaii (strain DSM 16993 / JCM 10545 / NBRC 100140 / 7) (Sulfolobus tokodaii).